A 296-amino-acid chain; its full sequence is Tyrosine recombinase XerC (296 aa).

The Core-binding (CB) domain maps to 1–84; the sequence is MEKIQQAYLY…TLRSFYEYWM (84 aa). The Tyr recombinase domain occupies 105 to 286; the sequence is YLPHFFYEEE…TNEQLRKVYL (182 aa). Residues arginine 145, lysine 169, histidine 238, arginine 241, and histidine 264 contribute to the active site. The active-site O-(3'-phospho-DNA)-tyrosine intermediate is the tyrosine 273.

This sequence belongs to the 'phage' integrase family. XerC subfamily. In terms of assembly, forms a cyclic heterotetrameric complex composed of two molecules of XerC and two molecules of XerD.

It localises to the cytoplasm. Its function is as follows. Site-specific tyrosine recombinase, which acts by catalyzing the cutting and rejoining of the recombining DNA molecules. The XerC-XerD complex is essential to convert dimers of the bacterial chromosome into monomers to permit their segregation at cell division. It also contributes to the segregational stability of plasmids. The sequence is that of Tyrosine recombinase XerC from Staphylococcus saprophyticus subsp. saprophyticus (strain ATCC 15305 / DSM 20229 / NCIMB 8711 / NCTC 7292 / S-41).